The chain runs to 437 residues: GTPase Der (437 aa).

2 EngA-type G domains span residues 3-168 (PLIA…PESE) and 178-353 (VKLA…RNRS). Residues 9-16 (GRPNVGKS), 56-60 (DTGGY), 120-123 (NKVE), 184-191 (GRPNVGKS), 231-235 (DTAGL), and 296-299 (NKWD) each bind GTP. One can recognise a KH-like domain in the interval 354–437 (RKISTSSLNR…VPISLRFMEK (84 aa)).

It belongs to the TRAFAC class TrmE-Era-EngA-EngB-Septin-like GTPase superfamily. EngA (Der) GTPase family. In terms of assembly, associates with the 50S ribosomal subunit.

In terms of biological role, GTPase that plays an essential role in the late steps of ribosome biogenesis. In Chlorobium limicola (strain DSM 245 / NBRC 103803 / 6330), this protein is GTPase Der.